A 243-amino-acid chain; its full sequence is Ubiquinone/menaquinone biosynthesis C-methyltransferase UbiE (243 aa).

S-adenosyl-L-methionine is bound by residues Thr69, Asp90, and 116–117 (DA).

This sequence belongs to the class I-like SAM-binding methyltransferase superfamily. MenG/UbiE family.

It carries out the reaction a 2-demethylmenaquinol + S-adenosyl-L-methionine = a menaquinol + S-adenosyl-L-homocysteine + H(+). The catalysed reaction is a 2-methoxy-6-(all-trans-polyprenyl)benzene-1,4-diol + S-adenosyl-L-methionine = a 5-methoxy-2-methyl-3-(all-trans-polyprenyl)benzene-1,4-diol + S-adenosyl-L-homocysteine + H(+). It functions in the pathway quinol/quinone metabolism; menaquinone biosynthesis; menaquinol from 1,4-dihydroxy-2-naphthoate: step 2/2. Its pathway is cofactor biosynthesis; ubiquinone biosynthesis. Functionally, methyltransferase required for the conversion of demethylmenaquinol (DMKH2) to menaquinol (MKH2) and the conversion of 2-polyprenyl-6-methoxy-1,4-benzoquinol (DDMQH2) to 2-polyprenyl-3-methyl-6-methoxy-1,4-benzoquinol (DMQH2). In Ralstonia pickettii (strain 12J), this protein is Ubiquinone/menaquinone biosynthesis C-methyltransferase UbiE.